The chain runs to 507 residues: ATP synthase subunit alpha, plastid (507 aa).

Glycine 170–threonine 177 is a binding site for ATP.

The protein belongs to the ATPase alpha/beta chains family. As to quaternary structure, F-type ATPases have 2 components, CF(1) - the catalytic core - and CF(0) - the membrane proton channel. CF(1) has five subunits: alpha(3), beta(3), gamma(1), delta(1), epsilon(1). CF(0) has four main subunits: a, b, b' and c.

Its subcellular location is the plastid membrane. The enzyme catalyses ATP + H2O + 4 H(+)(in) = ADP + phosphate + 5 H(+)(out). Produces ATP from ADP in the presence of a proton gradient across the membrane. The alpha chain is a regulatory subunit. The chain is ATP synthase subunit alpha, plastid from Cuscuta gronovii (Common dodder).